Consider the following 508-residue polypeptide: Cell death protein 3 (508 aa).

Residues 1-223 (MMRQDRRNLL…FHEEDMNYVD (223 aa)) constitute a propeptide that is removed on maturation. In terms of domain architecture, CARD spans 2-91 (MRQDRRNLLE…HELAAVLEPL (90 aa)). Disordered stretches follow at residues 106 to 130 (PMSP…TRVH) and 148 to 184 (YTRA…SSAN). The span at 118–127 (LSPSTFSSPT) shows a compositional bias: polar residues. Low complexity predominate over residues 171 to 184 (SPSNSFQSQPSSAN). Active-site residues include H317 and C360. The required for interaction with ced-4 stretch occupies residues 392-407 (GPLFNFLGCVRPQAQQ).

The protein belongs to the peptidase C14A family. The active form is probably a heterodimer of the p17 subunit with either the p15 or p13 subunit which are all derived from the precursor by autocatalysis. Interacts with octameric ced-4 (two ced-3 zymogens per one ced-4 octamer); the interaction causes the autoproteolytic cleavage and activation of ced-3. Processed ced-3 also interacts with ced-4 octamer to form a stable holoenzyme. Interacts (via large subunit p17) with csp-3; the interaction prevents ced-3 autoactivation and delays ced-4-induced ced-3 processing. Interacts (via large subunit p17 or small subunit p13 or p15) with csp-2; the interaction inhibits ced-3 autoactivation. Interacts (via propeptide) with nucleoporin npp-14; the interaction tethers ced-3 to the nuclear membrane and prevents its autoprocessing in absence of ced-4. Interacts with dct-1. May form a complex composed of ced-3, ced-4 and mac-1. In terms of processing, autocatalytic cleavage removes the propeptide and generates the catalytic subunit p17 and two non-catalytic subunits p15 and p13; autoproteolysis is induced by ced-4 oligomer. Cleaved by caspase csp-1 probably at Asp-146 and Asp-376.

The protein localises to the nucleus membrane. The protein resides in the perikaryon. It localises to the synapse. Its subcellular location is the mitochondrion. It is found in the cytoplasm. The protein localises to the perinuclear region. The catalysed reaction is Strict requirement for an Asp residue at position P1 and has a preferred cleavage sequence of Asp-Glu-Val-Asp-|-.. Its activity is regulated as follows. Octameric ced-4 activates zymogen autoprocessing and enhances activity of processed ced-3. Zymogen autoactivation is inhibited by csp-3. csp-3 has no effect on active ced-3. Zymogen autoactivation is inhibited by csp-2. Inhibited by cysteine protease inhibitor iodoacetic acid (CH3COOI). Inhibited by benzyloxycarbonyl-DEVD-fluoro-methyl ketone (zDEVD-fmk). Inhibited by benzyloxycarbonyl-VAD-fluoro-methyl ketone (zVAD-fmk). Not inhibited by N-[N-(L-3-transcarboxirane-2-carbonyl)-leucyl]-agmatine (E-64) or by the serine and cysteine protease inhibitor L-1-chloro-3-[4-to-osylamido]-7-amino-2-heptanone (TLCK). Functionally, acts as a cysteine protease in controlling programmed cell death (apoptosis) by proteolytically activating or inactivating a wide range of substrates. Component of the egl-1, ced-9, ced-4 and ced-3 apoptotic signaling cascade required for the initiation of programmed cell death in cells fated to die during embryonic and postembryonic development. During oogenesis, required for germline apoptosis downstream of ced-9 and ced-4 but independently of egl-1. By cleaving and activating ced-8, promotes phosphatidylserine exposure on the surface of apoptotic cells; phosphatidylserine is a specific marker only present at the surface of apoptotic cells and acts as a specific signal for engulfment. By cleaving and converting dcr-1 into a deoxyribonuclease (DNase), promotes apoptotic chromosomal DNA fragmentation. By cleaving mitochondrial fission protein drp-1, may regulate the removal of mitochondria during apoptosis. During germline apoptosis, cleaves translation initiation factor ifg-1 (isoform p170) promoting cap-independent translation. During male tail morphogenesis, promotes apoptosis of the tail-spike cell downstream of ced-4 but independently of egl-1 and ced-9. By cleaving cnt-1, prevents the activation of the prosurvival akt-1/2 signaling pathway and thus promotes apoptosis. Downstream of ced-4, may play a role in sex-specific cell apoptosis by cleaving sex-determining protein fem-1. May regulate germline apoptosis in response to DNA damage, probably downstream of let-60/ras and mpk-1 pathway. Cleaves ced-9 in vitro. Cleaves csp-2 isoform b resulting in the removal of the propeptide and the generation of csp-2 subunit p31 in vitro. Independently of its apoptotic role has additional functions. Probably by cleaving and thereby activating actin-severing protein gsnl-1, required for the elimination of transient presynaptic components during larval development downstream of egl-1, ced-9 and ced-4 pathway. Together with ain-1, a component of the miRNA-induced-silencing complex (miRISC), regulates temporal cell fate patterning during larval development. Acts in cell fate patterning by cleaving heterochronic protein lin-28, likely promoting its degradation. Also cleaves heterochronic protein lin-14 and exonuclease disl-2 in vitro. Downstream of calreticulin crt-1 and ced-4 and independently of egl-1 and ced-9, plays a role in the initial steps of axonal regrowth following axotomy. Cleaves 14-3-3-like protein ftt-2, tubulin tbb-2 and calreticulin crt-1 in vitro. Plays also a role in resistance to S.typhimurium-mediated infection. This is Cell death protein 3 from Caenorhabditis remanei (Caenorhabditis vulgaris).